We begin with the raw amino-acid sequence, 347 residues long: Protein RecA (347 aa).

65–72 (GPESSGKT) is an ATP binding site.

The protein belongs to the RecA family.

It localises to the cytoplasm. Its function is as follows. Can catalyze the hydrolysis of ATP in the presence of single-stranded DNA, the ATP-dependent uptake of single-stranded DNA by duplex DNA, and the ATP-dependent hybridization of homologous single-stranded DNAs. It interacts with LexA causing its activation and leading to its autocatalytic cleavage. The sequence is that of Protein RecA from Aliivibrio salmonicida (strain LFI1238) (Vibrio salmonicida (strain LFI1238)).